A 264-amino-acid chain; its full sequence is Probable membrane transporter protein HI_0902 (264 aa).

Helical transmembrane passes span 4-24 (FILL…LFGI), 28-48 (LVIV…ESLL), 49-69 (MSTA…GSAQ), 81-101 (AVRI…LFIG), 107-127 (ISAK…VLSI), 147-167 (ILIG…IVPF), 183-203 (AFCG…SGWG), 210-230 (YSLG…SFFT), and 243-263 (VSTL…NMFL).

Belongs to the 4-toluene sulfonate uptake permease (TSUP) (TC 2.A.102) family.

The protein resides in the cell membrane. This chain is Probable membrane transporter protein HI_0902, found in Haemophilus influenzae (strain ATCC 51907 / DSM 11121 / KW20 / Rd).